The primary structure comprises 255 residues: MGRHKKPETIYDIHEANDRLADVFRNHGFDLVSHSQRQQLAHFYRLLMLNQEKENFTRLLKLRDVAIKHFIDSIIIMKYTDLQFPLLDVGTGPGFPGIPLKIMYPDQQILLGEGVQRRVEFLKHVRSEMNLKNLDILGRNINKHCVYPVRGAITRAVEDIGNTLGNVMSCLEIGGRVYFMKGPGVGPEIEAAKKDWGEYYKLVQDVAYSLPQTPHERRLVVYEKIKNMPLPEEDEGEELLMDELSNEEKRRWAKY.

The S-adenosyl-L-methionine site is built by Gly90, Phe95, and Arg155. The segment covering 233–245 (EDEGEELLMDELS) has biased composition (acidic residues). The tract at residues 233–255 (EDEGEELLMDELSNEEKRRWAKY) is disordered. Positions 246–255 (NEEKRRWAKY) are enriched in basic and acidic residues.

The protein belongs to the methyltransferase superfamily. RNA methyltransferase RsmG family.

Its subcellular location is the cytoplasm. The enzyme catalyses guanosine(527) in 16S rRNA + S-adenosyl-L-methionine = N(7)-methylguanosine(527) in 16S rRNA + S-adenosyl-L-homocysteine. Its function is as follows. Specifically methylates the N7 position of guanine in position 527 of 16S rRNA. This is Ribosomal RNA small subunit methyltransferase G 2 from Bdellovibrio bacteriovorus (strain ATCC 15356 / DSM 50701 / NCIMB 9529 / HD100).